Here is a 351-residue protein sequence, read N- to C-terminus: Blue-sensitive opsin (351 aa).

Over 1 to 40 (MKQVPEFHEDFYIPIPLDINNLSAYSPFLVPQDHLGNQGI) the chain is Extracellular. N-linked (GlcNAc...) asparagine glycosylation is present at asparagine 21. The chain crosses the membrane as a helical span at residues 41–65 (FMAMSVFMFFIFIGGASINILTILC). Residues 66–77 (TIQFKKLRSHLN) are Cytoplasmic-facing. Residues 78-103 (YILVNLSIANLFVAIFGSPLSFYSFF) form a helical membrane-spanning segment. Topologically, residues 104–117 (NRYFIFGATACKIE) are extracellular. Cysteine 114 and cysteine 191 are oxidised to a cystine. Residues 118-137 (GFLATLGGMVGLWSLAVVAF) form a helical membrane-spanning segment. Over 138–156 (ERWLVICKPLGNFTFKTPH) the chain is Cytoplasmic. The chain crosses the membrane as a helical span at residues 157–180 (AIAGCILPWISALAASLPPLFGWS). Topologically, residues 181-206 (RYIPEGLQCSCGPDWYTTNNKYNNES) are extracellular. Residues 207 to 234 (YVMFLFCFCFAVPFGTIVFCYGQLLITL) traverse the membrane as a helical segment. Topologically, residues 235 to 256 (KLAAKAQADSASTQKAEREVTK) are cytoplasmic. Residues 257-280 (MVVVMVLGFLVCWAPYASFSLWIV) traverse the membrane as a helical segment. The Extracellular segment spans residues 281–288 (SHRGEEFD). Residues 289 to 313 (LRMATIPSCLSKASTVYNPVIYVLM) form a helical membrane-spanning segment. Lysine 300 bears the N6-(retinylidene)lysine mark. The Cytoplasmic segment spans residues 314 to 351 (NKQFRSCMMKMVCGKNIEEDEASTSSQVTQVSSVAPEK).

The protein belongs to the G-protein coupled receptor 1 family. Opsin subfamily. In terms of processing, phosphorylated on some or all of the serine and threonine residues present in the C-terminal region. As to expression, the color pigments are found in the cone photoreceptor cells.

The protein resides in the membrane. Functionally, visual pigments are the light-absorbing molecules that mediate vision. They consist of an apoprotein, opsin, covalently linked to cis-retinal. The polypeptide is Blue-sensitive opsin (Carassius auratus (Goldfish)).